The primary structure comprises 173 residues: Crossover junction endodeoxyribonuclease RuvC (173 aa).

Active-site residues include Asp-8, Glu-67, and Asp-139. 3 residues coordinate Mg(2+): Asp-8, Glu-67, and Asp-139.

Belongs to the RuvC family. Homodimer which binds Holliday junction (HJ) DNA. The HJ becomes 2-fold symmetrical on binding to RuvC with unstacked arms; it has a different conformation from HJ DNA in complex with RuvA. In the full resolvosome a probable DNA-RuvA(4)-RuvB(12)-RuvC(2) complex forms which resolves the HJ. Mg(2+) is required as a cofactor.

It is found in the cytoplasm. The enzyme catalyses Endonucleolytic cleavage at a junction such as a reciprocal single-stranded crossover between two homologous DNA duplexes (Holliday junction).. In terms of biological role, the RuvA-RuvB-RuvC complex processes Holliday junction (HJ) DNA during genetic recombination and DNA repair. Endonuclease that resolves HJ intermediates. Cleaves cruciform DNA by making single-stranded nicks across the HJ at symmetrical positions within the homologous arms, yielding a 5'-phosphate and a 3'-hydroxyl group; requires a central core of homology in the junction. The consensus cleavage sequence is 5'-(A/T)TT(C/G)-3'. Cleavage occurs on the 3'-side of the TT dinucleotide at the point of strand exchange. HJ branch migration catalyzed by RuvA-RuvB allows RuvC to scan DNA until it finds its consensus sequence, where it cleaves and resolves the cruciform DNA. In Salmonella choleraesuis (strain SC-B67), this protein is Crossover junction endodeoxyribonuclease RuvC.